The sequence spans 180 residues: Superoxide dismutase [Cu-Zn] (180 aa).

Positions M1–A19 are cleaved as a signal peptide. Cu cation-binding residues include H68, H70, and H85. An intrachain disulfide couples C79 to C171. Zn(2+) is bound by residues H85, H93, H102, and D105. H142 serves as a coordination point for Cu cation.

It belongs to the Cu-Zn superoxide dismutase family. In terms of assembly, homodimer. It depends on Cu cation as a cofactor. Requires Zn(2+) as cofactor.

The protein resides in the cytoplasm. The catalysed reaction is 2 superoxide + 2 H(+) = H2O2 + O2. Its activity is regulated as follows. The insertion of copper which activates the protein requires glutathione. This is independent of copper chaperone for SOD1 (CCS), which activates orthologs. Protects cells against oxidative stress by converting superoxide radicals to hydrogen peroxide. Required for normal brood size. May be involved in regulating mpk-1 phosphorylation downstream of phosphatase ptp-2 during oocyte maturation. This is Superoxide dismutase [Cu-Zn] (sod-1) from Caenorhabditis elegans.